A 116-amino-acid chain; its full sequence is Large ribosomal subunit protein uL18 (116 aa).

The protein belongs to the universal ribosomal protein uL18 family. In terms of assembly, part of the 50S ribosomal subunit; part of the 5S rRNA/L5/L18/L25 subcomplex. Contacts the 5S and 23S rRNAs.

In terms of biological role, this is one of the proteins that bind and probably mediate the attachment of the 5S RNA into the large ribosomal subunit, where it forms part of the central protuberance. This chain is Large ribosomal subunit protein uL18, found in Pseudomonas putida (strain W619).